A 377-amino-acid polypeptide reads, in one-letter code: Actin-related protein T2 (377 aa).

Belongs to the actin family.

It localises to the cytoplasm. Its subcellular location is the cytoskeleton. In Homo sapiens (Human), this protein is Actin-related protein T2 (ACTRT2).